We begin with the raw amino-acid sequence, 130 residues long: S-adenosylmethionine decarboxylase proenzyme (130 aa).

Residue Ser63 is the Schiff-base intermediate with substrate; via pyruvic acid of the active site. Ser63 is subject to Pyruvic acid (Ser); by autocatalysis. Residue His68 is the Proton acceptor; for processing activity of the active site. Residue Cys83 is the Proton donor; for catalytic activity of the active site.

It belongs to the prokaryotic AdoMetDC family. Type 1 subfamily. Heterotetramer of two alpha and two beta chains arranged as a dimer of alpha/beta heterodimers. The cofactor is pyruvate. Is synthesized initially as an inactive proenzyme. Formation of the active enzyme involves a self-maturation process in which the active site pyruvoyl group is generated from an internal serine residue via an autocatalytic post-translational modification. Two non-identical subunits are generated from the proenzyme in this reaction, and the pyruvate is formed at the N-terminus of the alpha chain, which is derived from the carboxyl end of the proenzyme. The post-translation cleavage follows an unusual pathway, termed non-hydrolytic serinolysis, in which the side chain hydroxyl group of the serine supplies its oxygen atom to form the C-terminus of the beta chain, while the remainder of the serine residue undergoes an oxidative deamination to produce ammonia and the pyruvoyl group blocking the N-terminus of the alpha chain.

It carries out the reaction S-adenosyl-L-methionine + H(+) = S-adenosyl 3-(methylsulfanyl)propylamine + CO2. Its pathway is amine and polyamine biosynthesis; S-adenosylmethioninamine biosynthesis; S-adenosylmethioninamine from S-adenosyl-L-methionine: step 1/1. Catalyzes the decarboxylation of S-adenosylmethionine to S-adenosylmethioninamine (dcAdoMet), the propylamine donor required for the synthesis of the polyamines spermine and spermidine from the diamine putrescine. This is S-adenosylmethionine decarboxylase proenzyme from Thermosipho africanus (strain TCF52B).